The following is a 187-amino-acid chain: Elongation factor P (187 aa).

This sequence belongs to the elongation factor P family.

The protein resides in the cytoplasm. Its pathway is protein biosynthesis; polypeptide chain elongation. Functionally, involved in peptide bond synthesis. Stimulates efficient translation and peptide-bond synthesis on native or reconstituted 70S ribosomes in vitro. Probably functions indirectly by altering the affinity of the ribosome for aminoacyl-tRNA, thus increasing their reactivity as acceptors for peptidyl transferase. This Prochlorococcus marinus (strain NATL1A) protein is Elongation factor P.